The following is a 347-amino-acid chain: Ribosomal RNA large subunit methyltransferase M (347 aa).

S-adenosyl-L-methionine-binding positions include Ser184, 217–220, Asp236, Asp256, and Asp272; that span reads APGG. Lys301 (proton acceptor) is an active-site residue.

This sequence belongs to the class I-like SAM-binding methyltransferase superfamily. RNA methyltransferase RlmE family. RlmM subfamily. In terms of assembly, monomer.

It is found in the cytoplasm. The catalysed reaction is cytidine(2498) in 23S rRNA + S-adenosyl-L-methionine = 2'-O-methylcytidine(2498) in 23S rRNA + S-adenosyl-L-homocysteine + H(+). In terms of biological role, catalyzes the 2'-O-methylation at nucleotide C2498 in 23S rRNA. The polypeptide is Ribosomal RNA large subunit methyltransferase M (Xanthomonas euvesicatoria pv. vesicatoria (strain 85-10) (Xanthomonas campestris pv. vesicatoria)).